The sequence spans 330 residues: UPF0353 protein MAP_3434 (330 aa).

2 helical membrane-spanning segments follow: residues 21-41 (GMLLFGLVPLALLALYLVVQA) and 63-83 (LPIAVSLLSLVLLTIALATPT). The VWFA domain maps to 94-289 (VIMLVIDMSQ…GELQKSYNAI (196 aa)). A helical membrane pass occupies residues 304-324 (AGWLRLGVLTALIATALALLI).

The protein belongs to the UPF0353 family.

Its subcellular location is the cell membrane. The sequence is that of UPF0353 protein MAP_3434 from Mycolicibacterium paratuberculosis (strain ATCC BAA-968 / K-10) (Mycobacterium paratuberculosis).